Reading from the N-terminus, the 615-residue chain is Zinc finger protein 653 (615 aa).

3 disordered regions span residues 1–46, 93–115, and 174–235; these read MAER…ARRR, RSGRHGKPWEQVPKKPKRKKRRR, and PLSD…SGLI. Positions 7 to 25 are enriched in low complexity; sequence EPGAEAEAGAGGEAAAEEG. Residues 106–115 show a composition bias toward basic residues; that stretch reads KKPKRKKRRR. 2 stretches are compositionally biased toward low complexity: residues 192 to 203 and 212 to 232; these read GSSDSSSSGSSS and QPAKASAAAAALTPASPTGSS. 5 C2H2-type zinc fingers span residues 467-492, 498-522, 528-550, 556-578, and 586-609; these read FHCPYEGCSQVYVALSSFQNHVNLVH, KVCPHPGCGKKFYLSNHLRRHMIIH, FTCETCGKSFKRKNHLEVHRRTH, LQCEICGYQCRQRASLNWHMKKH, and FTCDRCGKRFEKLDSVKFHTLKSH.

This sequence belongs to the krueppel C2H2-type zinc-finger protein family. As to quaternary structure, interacts with NR5A1. As to expression, highly expressed in testis and spleen. Moderately expressed in lung, adrenal gland, uterus, and ovary. Very low expression in pancreas, heart, skeletal muscle, adipose tissue, kidney, and liver.

The protein resides in the nucleus. Functionally, transcriptional repressor. May repress NR5A1, PPARG, NR1H3, NR4A2, ESR1 and NR3C1 transcriptional activity. This is Zinc finger protein 653 (Znf653) from Mus musculus (Mouse).